The primary structure comprises 314 residues: Fibrinogen-like protein 1 (314 aa).

The first 22 residues, 1–22 (MGEIRSFVLITVALILGKESWV), serve as a signal peptide directing secretion. A coiled-coil region spans residues 28–62 (CLQEQVRLRAQVRQLETRVKQQQVVIAQLLHEKEV). The 233-residue stretch at 76-308 (LGGKRHYADC…SVVMKIRPSD (233 aa)) folds into the Fibrinogen C-terminal domain. 2 disulfides stabilise this stretch: Cys-85–Cys-114 and Cys-250–Cys-263.

Homodimer. Interacts (via the Fibrinogen C-terminal domain) with LAG3 (via Ig-like domains 1 and 2).

The protein resides in the secreted. Its function is as follows. Immune suppressive molecule that inhibits antigen-specific T-cell activation by acting as a major ligand of LAG3. Responsible for LAG3 T-cell inhibitory function. Binds LAG3 independently from MHC class II (MHC-II). Secreted by, and promotes growth of, hepatocytes. The chain is Fibrinogen-like protein 1 from Rattus norvegicus (Rat).